We begin with the raw amino-acid sequence, 188 residues long: Peptidyl-tRNA hydrolase (188 aa).

Tyr15 contributes to the tRNA binding site. His20 acts as the Proton acceptor in catalysis. Residues Tyr64, Asn66, and Asn112 each contribute to the tRNA site.

It belongs to the PTH family. Monomer.

The protein localises to the cytoplasm. It carries out the reaction an N-acyl-L-alpha-aminoacyl-tRNA + H2O = an N-acyl-L-amino acid + a tRNA + H(+). Hydrolyzes ribosome-free peptidyl-tRNAs (with 1 or more amino acids incorporated), which drop off the ribosome during protein synthesis, or as a result of ribosome stalling. In terms of biological role, catalyzes the release of premature peptidyl moieties from peptidyl-tRNA molecules trapped in stalled 50S ribosomal subunits, and thus maintains levels of free tRNAs and 50S ribosomes. The chain is Peptidyl-tRNA hydrolase from Cytophaga hutchinsonii (strain ATCC 33406 / DSM 1761 / CIP 103989 / NBRC 15051 / NCIMB 9469 / D465).